A 350-amino-acid polypeptide reads, in one-letter code: Nicotinate-nucleotide--dimethylbenzimidazole phosphoribosyltransferase (350 aa).

The active-site Proton acceptor is the Glu318.

Belongs to the CobT family.

The enzyme catalyses 5,6-dimethylbenzimidazole + nicotinate beta-D-ribonucleotide = alpha-ribazole 5'-phosphate + nicotinate + H(+). The protein operates within nucleoside biosynthesis; alpha-ribazole biosynthesis; alpha-ribazole from 5,6-dimethylbenzimidazole: step 1/2. Catalyzes the synthesis of alpha-ribazole-5'-phosphate from nicotinate mononucleotide (NAMN) and 5,6-dimethylbenzimidazole (DMB). In Citrifermentans bemidjiense (strain ATCC BAA-1014 / DSM 16622 / JCM 12645 / Bem) (Geobacter bemidjiensis), this protein is Nicotinate-nucleotide--dimethylbenzimidazole phosphoribosyltransferase.